A 2544-amino-acid chain; its full sequence is Highly reducing polyketide synthase pkhB (2544 aa).

In terms of domain architecture, Ketosynthase family 3 (KS3) spans 9–438 (SEPIAIIGMS…GTNAHVILES (430 aa)). Residues cysteine 182, histidine 317, and histidine 358 each act as for beta-ketoacyl synthase activity in the active site. Residues 566–876 (VFTGQVFRRS…PYWGCLVRDE (311 aa)) form a malonyl-CoA:ACP transacylase (MAT) domain region. Residues 948 to 1082 (HELLGMPVAG…GMVGIEESAV (135 aa)) are N-terminal hotdog fold. The tract at residues 948 to 1252 (HELLGMPVAG…VELAALGRGS (305 aa)) is dehydratase (DH) domain. A PKS/mFAS DH domain is found at 948 to 1254 (HELLGMPVAG…LAALGRGSSA (307 aa)). Residue histidine 980 is the Proton acceptor; for dehydratase activity of the active site. Positions 1095–1254 (YTRQPNPQDL…LAALGRGSSA (160 aa)) are C-terminal hotdog fold. Aspartate 1165 serves as the catalytic Proton donor; for dehydratase activity. Residues 1398–1573 (SSLRQLSALL…FSGLDLEIYD (176 aa)) form a methyltransferase (CMet) domain region. The enoyl reductase (ER) domain stretch occupies residues 1826-2142 (GHLGTLAFAE…TGDQMGKVVL (317 aa)). Residues 2169–2356 (ASYLIVGGVG…GVAIDLGPIS (188 aa)) form a ketoreductase (KR) domain region. The Carrier domain maps to 2462–2539 (EGARLIGAAI…ALAGLVAEKS (78 aa)). Position 2499 is an O-(pantetheine 4'-phosphoryl)serine (serine 2499).

The cofactor is pantetheine 4'-phosphate.

Its pathway is secondary metabolite biosynthesis. Functionally, highly reducing polyketide synthase; part of the pkh gene cluster that mediates the biosynthesis of 2,4-dihydroxy-6-[(3E,5E,7E)-2-oxonona-3,5,7-trienyl]benzaldehyde. The highly reducing polyketide synthase pkhB first produces the (2E,4E,6E)-octa-2,4,6-trienyl strater unit for the non-reducing polyketide synthase pkhA. This octatrienoyl starter is then loaded onto the SAT domain of the NR-PKS pkhA to be condensed with 4 malonyl-CoA units to yield 2,4-dihydroxy-6-[(3E,5E,7E)-2-oxonona-3,5,7-trienyl]benzaldehyde. The chain is Highly reducing polyketide synthase pkhB from Emericella nidulans (strain FGSC A4 / ATCC 38163 / CBS 112.46 / NRRL 194 / M139) (Aspergillus nidulans).